The primary structure comprises 70 residues: Protease inhibitor HPI (70 aa).

The residue at position 2 (Ala-2) is an N-acetylalanine. Position 5 is an S-glutathionyl cysteine; alternate (Cys-5).

Belongs to the protease inhibitor I13 (potato type I serine protease inhibitor) family. As to quaternary structure, monomer and homodimer; disulfide-linked. Occurs in 3 forms that differ in the modification of Cys-5, HPI-1 forms a homodimer through a disulfide bond, HPI-2a is modified by glutathionylation, and HPI-2b is covalently modified by addition of an unidentified adduct but not by a disulfide linkage.

Inhibitor of serine proteases, strongly inhibits subtilisin A and weakly inhibits trypsin. Does not inhibit chymotrypsin, papain, pepsin, pronase E, protease type XIII and thermolysin. HPI-1 inhibits subtilisin A with an Ki of 0.21 nM. HPI-2a inhibits subtilisin A with an Ki of 0.08 nM. HPI-2b inhibits subtilisin A with an Ki of 0.1 nM. The sequence is that of Protease inhibitor HPI from Hevea brasiliensis (Para rubber tree).